Consider the following 288-residue polypeptide: Co-chaperone protein DjlA (288 aa).

At 1-6 (MEFIGK) the chain is on the periplasmic side. A helical membrane pass occupies residues 7-30 (IIGVFLGWKVGGFFGAIAGLILGS). The Cytoplasmic segment spans residues 31–288 (IADKKLYELG…DLICKAKGWK (258 aa)). The region spanning 222–288 (DAYKVLGVTE…DLICKAKGWK (67 aa)) is the J domain.

Homodimer.

It localises to the cell inner membrane. In terms of biological role, regulatory DnaK co-chaperone. Direct interaction between DnaK and DjlA is needed for the induction of the wcaABCDE operon, involved in the synthesis of a colanic acid polysaccharide capsule, possibly through activation of the RcsB/RcsC phosphotransfer signaling pathway. The colanic acid capsule may help the bacterium survive conditions outside the host. The sequence is that of Co-chaperone protein DjlA from Haemophilus influenzae (strain ATCC 51907 / DSM 11121 / KW20 / Rd).